A 443-amino-acid chain; its full sequence is uncharacterized protein (443 aa).

This is an uncharacterized protein from Saccharomyces cerevisiae (strain ATCC 204508 / S288c) (Baker's yeast).